Here is a 529-residue protein sequence, read N- to C-terminus: Bifunctional purine biosynthesis protein PurH (529 aa).

The 148-residue stretch at 1–148 (MQQRRPIRRA…KNHKDVAIVV (148 aa)) folds into the MGS-like domain.

It belongs to the PurH family.

It carries out the reaction (6R)-10-formyltetrahydrofolate + 5-amino-1-(5-phospho-beta-D-ribosyl)imidazole-4-carboxamide = 5-formamido-1-(5-phospho-D-ribosyl)imidazole-4-carboxamide + (6S)-5,6,7,8-tetrahydrofolate. The catalysed reaction is IMP + H2O = 5-formamido-1-(5-phospho-D-ribosyl)imidazole-4-carboxamide. Its pathway is purine metabolism; IMP biosynthesis via de novo pathway; 5-formamido-1-(5-phospho-D-ribosyl)imidazole-4-carboxamide from 5-amino-1-(5-phospho-D-ribosyl)imidazole-4-carboxamide (10-formyl THF route): step 1/1. It functions in the pathway purine metabolism; IMP biosynthesis via de novo pathway; IMP from 5-formamido-1-(5-phospho-D-ribosyl)imidazole-4-carboxamide: step 1/1. This chain is Bifunctional purine biosynthesis protein PurH, found in Pectobacterium carotovorum subsp. carotovorum (strain PC1).